The primary structure comprises 235 residues: Elongation factor Tu, chloroplastic (235 aa).

A tr-type G domain is found at 1-125; that stretch reads KNMITGAAQM…SVDSYIPTPI (125 aa). Position 47–50 (47–50) interacts with GTP; sequence NKED.

This sequence belongs to the TRAFAC class translation factor GTPase superfamily. Classic translation factor GTPase family. EF-Tu/EF-1A subfamily.

It is found in the plastid. The protein localises to the chloroplast. It carries out the reaction GTP + H2O = GDP + phosphate + H(+). GTP hydrolase that promotes the GTP-dependent binding of aminoacyl-tRNA to the A-site of ribosomes during protein biosynthesis. The sequence is that of Elongation factor Tu, chloroplastic (tufA) from Costaria costata (Five-ribbed kelp).